A 395-amino-acid chain; its full sequence is Putative pyridoxal phosphate-dependent acyltransferase (395 aa).

110 to 111 lines the pyridoxal 5'-phosphate pocket; sequence GF. Residue His-135 participates in substrate binding. Pyridoxal 5'-phosphate is bound by residues Ser-185, 210–213, and 240–243; these read DDAH and TLSK. Lys-243 carries the N6-(pyridoxal phosphate)lysine modification. A substrate-binding site is contributed by Thr-357.

The protein belongs to the class-II pyridoxal-phosphate-dependent aminotransferase family. Homodimer. It depends on pyridoxal 5'-phosphate as a cofactor.

This is Putative pyridoxal phosphate-dependent acyltransferase from Staphylococcus aureus (strain COL).